The primary structure comprises 117 residues: UPF0145 protein PH1682 (117 aa).

This sequence belongs to the UPF0145 family.

The chain is UPF0145 protein PH1682 from Pyrococcus horikoshii (strain ATCC 700860 / DSM 12428 / JCM 9974 / NBRC 100139 / OT-3).